The following is a 94-amino-acid chain: Large ribosomal subunit protein bL25 (94 aa).

The protein belongs to the bacterial ribosomal protein bL25 family. Part of the 50S ribosomal subunit; part of the 5S rRNA/L5/L18/L25 subcomplex. Contacts the 5S rRNA. Binds to the 5S rRNA independently of L5 and L18.

Functionally, this is one of the proteins that binds to the 5S RNA in the ribosome where it forms part of the central protuberance. This Photorhabdus laumondii subsp. laumondii (strain DSM 15139 / CIP 105565 / TT01) (Photorhabdus luminescens subsp. laumondii) protein is Large ribosomal subunit protein bL25.